The chain runs to 367 residues: Phosphoribosylaminoimidazole-succinocarboxamide synthase (367 aa).

Belongs to the SAICAR synthetase family.

The enzyme catalyses 5-amino-1-(5-phospho-D-ribosyl)imidazole-4-carboxylate + L-aspartate + ATP = (2S)-2-[5-amino-1-(5-phospho-beta-D-ribosyl)imidazole-4-carboxamido]succinate + ADP + phosphate + 2 H(+). It participates in purine metabolism; IMP biosynthesis via de novo pathway; 5-amino-1-(5-phospho-D-ribosyl)imidazole-4-carboxamide from 5-amino-1-(5-phospho-D-ribosyl)imidazole-4-carboxylate: step 1/2. In Shewanella piezotolerans (strain WP3 / JCM 13877), this protein is Phosphoribosylaminoimidazole-succinocarboxamide synthase.